Consider the following 790-residue polypeptide: Chorion peroxidase (790 aa).

Positions 1–16 (MAKKVLLLSLYSAVLS) are cleaved as a signal peptide. Residues 17–209 (TWFGFGYVQC…ARIPRAIRKR (193 aa)) constitute a propeptide that is removed on maturation. An N-acetylcysteine; in Chorion peroxidase light chain modification is found at cysteine 210. A disulfide bond links cysteine 216 and cysteine 229. N-linked (Man) tryptophan glycosylation is present at tryptophan 259. Histidine 305 (proton acceptor) is an active-site residue. Asparagine 327 is a glycosylation site (N-linked (GlcNAc...) asparagine). At tyrosine 353 the chain carries 3',4'-dihydroxyphenylalanine. An intrachain disulfide couples cysteine 433 to cysteine 440. An N-linked (Man) tryptophan glycan is attached at tryptophan 479. Histidine 551 provides a ligand contact to heme b. N-linked (Man) tryptophan glycosylation is present at tryptophan 680. A disulfide bridge links cysteine 746 with cysteine 774. Tryptophan 785 is a glycosylation site (N-linked (Man) tryptophan).

Belongs to the peroxidase family. XPO subfamily. Heterodimer. The cofactor is heme b. In terms of processing, N-glycosylated on Trp by mannose and on Asn by N-acetylglucosamine. There is a hexose glycosylation of an unidentified residue between 654 and 708; Trp-680 is conserved in closely related species and is probably mannosylated.

It localises to the secreted. The enzyme catalyses 2 a phenolic donor + H2O2 = 2 a phenolic radical donor + 2 H2O. Its activity is regulated as follows. Extremely resistant to denaturating agents, such as SDS and organic solvents. Involved in the formation of a rigid and insoluble egg chorion by catalyzing chorion protein cross-linking through dityrosine formation and phenol oxidase-catalyzed chorion melanization. The sequence is that of Chorion peroxidase (pxt) from Aedes aegypti (Yellowfever mosquito).